Consider the following 224-residue polypeptide: UPF0758 protein Patl_0046 (224 aa).

The MPN domain maps to 102–224; that stretch reads VFNSAQQTKH…AVSFAERGLI (123 aa). 3 residues coordinate Zn(2+): histidine 173, histidine 175, and aspartate 186. The JAMM motif signature appears at 173-186; it reads HNHPSGVAEPSQAD.

This sequence belongs to the UPF0758 family.

This chain is UPF0758 protein Patl_0046, found in Pseudoalteromonas atlantica (strain T6c / ATCC BAA-1087).